The sequence spans 241 residues: NAD(P)H-quinone oxidoreductase subunit K (241 aa).

[4Fe-4S] cluster contacts are provided by Cys-60, Cys-61, Cys-125, and Cys-156. The tract at residues Ser-220–Asp-241 is disordered. Basic and acidic residues predominate over residues Gln-222–Asp-241.

It belongs to the complex I 20 kDa subunit family. In terms of assembly, NDH-1 can be composed of about 15 different subunits; different subcomplexes with different compositions have been identified which probably have different functions. It depends on [4Fe-4S] cluster as a cofactor.

It localises to the cellular thylakoid membrane. The catalysed reaction is a plastoquinone + NADH + (n+1) H(+)(in) = a plastoquinol + NAD(+) + n H(+)(out). The enzyme catalyses a plastoquinone + NADPH + (n+1) H(+)(in) = a plastoquinol + NADP(+) + n H(+)(out). In terms of biological role, NDH-1 shuttles electrons from an unknown electron donor, via FMN and iron-sulfur (Fe-S) centers, to quinones in the respiratory and/or the photosynthetic chain. The immediate electron acceptor for the enzyme in this species is believed to be plastoquinone. Couples the redox reaction to proton translocation, and thus conserves the redox energy in a proton gradient. Cyanobacterial NDH-1 also plays a role in inorganic carbon-concentration. The chain is NAD(P)H-quinone oxidoreductase subunit K from Prochlorococcus marinus (strain MIT 9215).